The following is a 257-amino-acid chain: RLA class II histocompatibility antigen, DP beta chain (257 aa).

A signal peptide spans 1–29 (MRPCRSLRTAALAVVLTVLLHPVALGRAT). The segment at 30 to 120 (PGESEQNYLW…LFQGLPVLLQ (91 aa)) is beta-1. Residues 30–224 (PGESEQNYLW…KAQSDSARSK (195 aa)) are Extracellular-facing. 2 cysteine pairs are disulfide-bonded: C45–C105 and C143–C199. An N-linked (GlcNAc...) asparagine glycan is attached at N49. Positions 121-214 (TQPRVSVSPS…SLDSPITVEW (94 aa)) are beta-2. The Ig-like C1-type domain maps to 123–211 (PRVSVSPSKK…EHPSLDSPIT (89 aa)). The tract at residues 215-224 (KAQSDSARSK) is connecting peptide. Residues 225 to 245 (MLAGVGGLVLGLVSLAVGVFM) form a helical membrane-spanning segment. Residues 246 to 257 (HRRSKKAQQGCR) lie on the Cytoplasmic side of the membrane.

The protein belongs to the MHC class II family.

It localises to the membrane. The polypeptide is RLA class II histocompatibility antigen, DP beta chain (Oryctolagus cuniculus (Rabbit)).